Here is a 194-residue protein sequence, read N- to C-terminus: Leucyl/phenylalanyl-tRNA--protein transferase (194 aa).

This sequence belongs to the L/F-transferase family.

Its subcellular location is the cytoplasm. It carries out the reaction N-terminal L-lysyl-[protein] + L-leucyl-tRNA(Leu) = N-terminal L-leucyl-L-lysyl-[protein] + tRNA(Leu) + H(+). The catalysed reaction is N-terminal L-arginyl-[protein] + L-leucyl-tRNA(Leu) = N-terminal L-leucyl-L-arginyl-[protein] + tRNA(Leu) + H(+). The enzyme catalyses L-phenylalanyl-tRNA(Phe) + an N-terminal L-alpha-aminoacyl-[protein] = an N-terminal L-phenylalanyl-L-alpha-aminoacyl-[protein] + tRNA(Phe). Functionally, functions in the N-end rule pathway of protein degradation where it conjugates Leu, Phe and, less efficiently, Met from aminoacyl-tRNAs to the N-termini of proteins containing an N-terminal arginine or lysine. The sequence is that of Leucyl/phenylalanyl-tRNA--protein transferase from Chlorobaculum tepidum (strain ATCC 49652 / DSM 12025 / NBRC 103806 / TLS) (Chlorobium tepidum).